The chain runs to 266 residues: Short-chain dehydrogenase/reductase AacuF (266 aa).

NADP(+) contacts are provided by Leu-13, Asp-57, and Asn-85. Residues Ser-145 and Tyr-164 each act as proton donor in the active site. NADP(+)-binding residues include Tyr-164, Lys-168, and Val-198. Residue Lys-168 is the Lowers pKa of active site Tyr of the active site.

Belongs to the short-chain dehydrogenases/reductases (SDR) family.

Its pathway is secondary metabolite biosynthesis. Short-chain dehydrogenase/reductase; part of the gene cluster that mediates the biosynthesis of the tetrahydroxanthone dimer secalonic acid D. The pathway begins with the synthesis of atrochrysone thioester by the polyketide synthase AacuL. The atrochrysone carboxyl ACP thioesterase AacuM then breaks the thioester bond and releases the atrochrysone carboxylic acid from AacuL. Atrochrysone carboxylic acid is decarboxylated by the decarboxylase AacuI, and oxidized by the anthrone oxygenase AacuG to yield emodin. Emodin is then reduced to emodin hydroquinone by a yet unidentified oxidoreductase. A-ring reduction by the short chain dehydrogenase AacuN, dehydration by the scytalone dehydratase-like protein AacuK and probable spontaneous re-oxidation, results in overall deoxygenation to chrysophanol. Baeyer-Villiger oxidation by the Baeyer-Villiger monooxygenase (BVMO) AacuH then yields monodictyphenone. Monodictyphenone is transformed into compounds with the tetrahydroxanthone skeleton via methylesterification by the methyltransferase AacuQ, followed by the action of the flavin-dependent monooxygenase AacuC, the isomerase AacuP, and the short chain dehydrogenase/reductase AacuF or AacuD. AacuF and AacuD should accept the same compound as a substrate but perform the ketoreduction with a different stereoselectivity, thus yielding blennolides B and A, respectively. In the final step of the biosynthesis, the cytochrome P450 monooxygenase AacuE accepts blennolide B and/or blennolide A to conduct the dimerization reaction to furnish the tetrahydroxanthone dimers, secalonic acids D, B, and F. The polypeptide is Short-chain dehydrogenase/reductase AacuF (Aspergillus aculeatus (strain ATCC 16872 / CBS 172.66 / WB 5094)).